A 218-amino-acid polypeptide reads, in one-letter code: Adenylate kinase (218 aa).

ATP is bound at residue 10–15 (GAGKGT). Positions 30 to 59 (STGDMLRAAVKAGSPLGLKVKEVMATGGLV) are NMP. AMP-binding positions include Thr-31, Arg-36, 57-59 (GLV), 85-88 (GFPR), and Gln-92. Positions 122 to 159 (GRRVHEASGRVYHVDYNPPKVEGKDDVTGEPLVQREDD) are LID. Residues Arg-123 and 132–133 (VY) each bind ATP. 2 residues coordinate AMP: Arg-156 and Arg-167. Gly-203 contributes to the ATP binding site.

The protein belongs to the adenylate kinase family. In terms of assembly, monomer.

It is found in the cytoplasm. The catalysed reaction is AMP + ATP = 2 ADP. It participates in purine metabolism; AMP biosynthesis via salvage pathway; AMP from ADP: step 1/1. In terms of biological role, catalyzes the reversible transfer of the terminal phosphate group between ATP and AMP. Plays an important role in cellular energy homeostasis and in adenine nucleotide metabolism. The sequence is that of Adenylate kinase from Hahella chejuensis (strain KCTC 2396).